The chain runs to 420 residues: Napsin-A (420 aa).

A signal peptide spans 1–25 (MSPPPLLQPLLLLLPLLNVEPSGAT). The propeptide at 26–63 (LIRIPLHRVQPGRRILNLLRGWREPAELPKLGAPSPGD) is activation peptide. In terms of domain architecture, Peptidase A1 spans 78 to 399 (YFGEIGLGTP…MKSSARVGLA (322 aa)). Asparagine 90 is a glycosylation site (N-linked (GlcNAc...) asparagine). Aspartate 96 is an active-site residue. Cysteines 109 and 116 form a disulfide. Residue asparagine 133 is glycosylated (N-linked (GlcNAc...) asparagine). Cysteine 274 and cysteine 278 are disulfide-bonded. The active site involves aspartate 283. Cysteine 317 and cysteine 354 are disulfide-bonded. N-linked (GlcNAc...) asparagine glycosylation occurs at asparagine 336.

Belongs to the peptidase A1 family. As to expression, expressed predominantly in adult lung (type II pneumocytes) and kidney and in fetal lung. Low levels in adult spleen and very low levels in peripheral blood leukocytes.

The protein localises to the secreted. Functionally, may be involved in processing of pneumocyte surfactant precursors. The protein is Napsin-A (NAPSA) of Homo sapiens (Human).